The sequence spans 117 residues: UPF0102 protein YPN_3432 (117 aa).

This sequence belongs to the UPF0102 family.

In Yersinia pestis bv. Antiqua (strain Nepal516), this protein is UPF0102 protein YPN_3432.